Reading from the N-terminus, the 153-residue chain is Cytochrome c-type biogenesis protein CcmE (153 aa).

Residues 1–8 (MTPVQRRR) lie on the Cytoplasmic side of the membrane. The helical; Signal-anchor for type II membrane protein transmembrane segment at 9-29 (LAWVLLALLASGLATALVAMA) threads the bilayer. Residues 30–153 (LERNIAYLYT…DVPVTAPEVR (124 aa)) lie on the Extracellular side of the membrane. The heme site is built by histidine 123 and tyrosine 127.

This sequence belongs to the CcmE/CycJ family.

It localises to the cell membrane. Heme chaperone required for the biogenesis of c-type cytochromes. Transiently binds heme delivered by CcmC and transfers the heme to apo-cytochromes in a process facilitated by CcmF and CcmH. This chain is Cytochrome c-type biogenesis protein CcmE, found in Stenotrophomonas maltophilia (strain K279a).